The sequence spans 85 residues: UPF0386 protein RL2079 (85 aa).

It belongs to the UPF0386 family.

This chain is UPF0386 protein RL2079, found in Rhizobium johnstonii (strain DSM 114642 / LMG 32736 / 3841) (Rhizobium leguminosarum bv. viciae).